The sequence spans 232 residues: MEFTKALIKGKLIKRYKRFFADVKIGKEIVTAHCPNTGSMKGLLDEGNMVYVSKNDDPKRKLKYTLEIIKVKKNLVGVNTHFANKIAFHGLVNNLVKEVANNDSIKAEVFFDKETRFDFLVEKNKQKIFVEVKNVTLFREEKTAEFPDAVTTRGSKHLKTLIEAVKKGYKSYLLFLVQIEGVDNFKIAKDIDKEYYENYLLAKKAGVNFLAYQCKINSKEIKIDKKIKIINA.

It belongs to the SfsA family.

This is Sugar fermentation stimulation protein homolog from Pelagibacter ubique (strain HTCC1062).